The sequence spans 491 residues: uncharacterized protein (491 aa).

Residue 266-273 participates in ATP binding; it reads GIQGTGKS.

Belongs to the AAA ATPase family. Highly divergent.

Its subcellular location is the plastid. It localises to the chloroplast. This is an uncharacterized protein from Porphyra purpurea (Red seaweed).